The primary structure comprises 706 residues: Polyribonucleotide nucleotidyltransferase (706 aa).

Mg(2+) contacts are provided by D488 and D494. The 60-residue stretch at 555–614 folds into the KH domain; that stretch reads PRLFTMKINPDKIRDVIGKGGSVIRALTEETGTQINIDEDGTITIASADPAKAEEAKRRI. An S1 motif domain is found at 624–692; that stretch reads GKIYEGPITK…EKGRIKLSMK (69 aa).

Belongs to the polyribonucleotide nucleotidyltransferase family. The cofactor is Mg(2+).

It is found in the cytoplasm. The enzyme catalyses RNA(n+1) + phosphate = RNA(n) + a ribonucleoside 5'-diphosphate. Its function is as follows. Involved in mRNA degradation. Catalyzes the phosphorolysis of single-stranded polyribonucleotides processively in the 3'- to 5'-direction. In Albidiferax ferrireducens (strain ATCC BAA-621 / DSM 15236 / T118) (Rhodoferax ferrireducens), this protein is Polyribonucleotide nucleotidyltransferase.